Here is a 464-residue protein sequence, read N- to C-terminus: Trigger factor (464 aa).

Positions 162-243 constitute a PPIase FKBP-type domain; that stretch reads GDFISIDLSA…VGTVKERELP (82 aa). Positions 428–464 are disordered; it reads GASVDTAELFGNGEADTEEAASTDEVASDSAEGEDQK.

It belongs to the FKBP-type PPIase family. Tig subfamily.

The protein resides in the cytoplasm. It carries out the reaction [protein]-peptidylproline (omega=180) = [protein]-peptidylproline (omega=0). Its function is as follows. Involved in protein export. Acts as a chaperone by maintaining the newly synthesized protein in an open conformation. Functions as a peptidyl-prolyl cis-trans isomerase. The polypeptide is Trigger factor (Rhodococcus opacus (strain B4)).